The primary structure comprises 489 residues: 5-hydroxytryptamine receptor 3A (489 aa).

Residues M1–G23 form the signal peptide. Topologically, residues S24–R246 are extracellular. N-linked (GlcNAc...) asparagine glycosylation is found at N109, N175, and N191. A disulfide bridge connects residues C162 and C176. Residues P247 to P273 form a helical membrane-spanning segment. Topologically, residues D274–R278 are cytoplasmic. A helical transmembrane segment spans residues V279–S297. The Extracellular portion of the chain corresponds to D298 to T307. Residues P308 to A326 traverse the membrane as a helical segment. Over E327 to R466 the chain is Cytoplasmic. The interval A425–D461 is HA-stretch; determines single-channel conductance in 5-HT3 receptors. A helical membrane pass occupies residues I467 to W486. Over H487–S489 the chain is Extracellular.

It belongs to the ligand-gated ion channel (TC 1.A.9) family. 5-hydroxytryptamine receptor (TC 1.A.9.2) subfamily. HTR3A sub-subfamily. As to quaternary structure, forms homopentameric as well as heteropentameric serotonin-activated cation-selective channel complexes with HTR3B or HTR3C or HTR3D or HTR3E. The homomeric complex is functional but exhibits low conductance with modified voltage dependence, and decreased agonist and antagonist affinity. Heteropentameric complexes display properties which resemble that of neuronal serotonin-activated channels in vivo. Interacts with RIC3. As to expression, brain, spinal cord, and heart.

It is found in the postsynaptic cell membrane. It localises to the cell membrane. The enzyme catalyses Na(+)(in) = Na(+)(out). It carries out the reaction K(+)(in) = K(+)(out). It catalyses the reaction Ca(2+)(in) = Ca(2+)(out). The catalysed reaction is Mg(2+)(in) = Mg(2+)(out). Its function is as follows. Forms serotonin (5-hydroxytryptamine/5-HT3)-activated cation-selective channel complexes, which when activated cause fast, depolarizing responses in neurons. The sequence is that of 5-hydroxytryptamine receptor 3A from Mus musculus (Mouse).